A 405-amino-acid chain; its full sequence is Argininosuccinate synthase (405 aa).

ATP is bound by residues 10-18 and Ala-37; that span reads AFSGGLDTS. L-citrulline is bound by residues Tyr-90 and Ser-95. Gly-120 contributes to the ATP binding site. Thr-122, Asn-126, and Asp-127 together coordinate L-aspartate. Position 126 (Asn-126) interacts with L-citrulline. 5 residues coordinate L-citrulline: Arg-130, Ser-181, Ser-190, Glu-266, and Tyr-278.

This sequence belongs to the argininosuccinate synthase family. Type 1 subfamily. In terms of assembly, homotetramer.

The protein localises to the cytoplasm. It carries out the reaction L-citrulline + L-aspartate + ATP = 2-(N(omega)-L-arginino)succinate + AMP + diphosphate + H(+). The protein operates within amino-acid biosynthesis; L-arginine biosynthesis; L-arginine from L-ornithine and carbamoyl phosphate: step 2/3. The protein is Argininosuccinate synthase of Rhizorhabdus wittichii (strain DSM 6014 / CCUG 31198 / JCM 15750 / NBRC 105917 / EY 4224 / RW1) (Sphingomonas wittichii).